A 950-amino-acid polypeptide reads, in one-letter code: MSDKKRINQIAKETGLSNTELVATAQSLGFEVKSHSSSVTAEQAEKIIQGVKTGTDTIVNLLKKLLKLKLRLVPETAKSKQEDHPRTFAGKAVVEDPAILARIKEKEEAKKAAKTEAEPIEEVITTEKPKVAEPVKKSEPKAAAKAEETKVEKVEAKANTVTPKAEVKTENVADKKEPVVTEEKKKSLTQKPRIQIKVIKRAEDIKKEQAAARPEKKKFDKNRNDRNNRNDNRRPNQNGNGQGHSQGGNHYDKNRPAGQGQNQGQKRDKFASSGSSSTSDTFTPAASGKNNRRDRDRKKTDSNRDNTKDGNRKGGPLRVNDNRNQVRNARNSNWNQKGGRGRYQNNQSSNVPATQRKFHELPESLEYEVGMNVQDIAKSIKREPAEIIKKLFMMGTMVNQNQSLDEDTIELILMDYGVTPLKKVEEDKSDIERLFVEDGYLNEDKMVERPAVVTIMGHVDHGKTTLLDRFRESRVTEGEAGGITQHIGAYQIKTNGKKITFLDTPGHEAFTSMRARGASVTDITILVVAADDGVMPQTIEAINHSKAAGVPIIVAINKLDKPGANPQRVTQELTEHGVFPVAWDPENGSEFVEISAKFNQNLEDLLDTVLLVAEVQELKADPSVRAIGTVVEARLDQGKGAIATLLVQQGTLHIQDPIVVGNTYGRVRTMTNDLGRRIKEAGPSTPIELTGLSDVPQAGDHFAVFEDEKAARAAGEERAKRAQLIKRQNTRRVNLDNLFDTLKEGQTKSVNIIIKADVQGSAEALAASLQKIEVEGVKVDIVHSAVGAISESDISLAAASNAIIIGFNVRPTGLAREQAAQEEVDIRLHSIIYKVIEEVETAMHGMLDPEFKEEIIGEAIVRETFNVSKVGTIAGFMVIRGKVTRDASVRVIREGVVIHDGAIASLKHFKDDVKEVGNAQEGGLMVEDFNDVEIDDTFEVYKMVEIERKK.

4 stretches are compositionally biased toward basic and acidic residues: residues 128–156 (KPKVAEPVKKSEPKAAAKAEETKVEKVEA), 165–186 (AEVKTENVADKKEPVVTEEKKK), 200–234 (KRAEDIKKEQAAARPEKKKFDKNRNDRNNRNDNRR), and 291–312 (NRRDRDRKKTDSNRDNTKDGNR). Positions 128–352 (KPKVAEPVKK…YQNNQSSNVP (225 aa)) are disordered. Polar residues-rich tracts occupy residues 322–336 (NRNQVRNARNSNWNQ) and 343–352 (YQNNQSSNVP). The tr-type G domain occupies 448 to 619 (ERPAVVTIMG…LLVAEVQELK (172 aa)). The interval 457–464 (GHVDHGKT) is G1. Residue 457 to 464 (GHVDHGKT) coordinates GTP. Residues 482–486 (GITQH) form a G2 region. The tract at residues 503-506 (DTPG) is G3. GTP is bound by residues 503–507 (DTPGH) and 557–560 (NKLD). A G4 region spans residues 557–560 (NKLD). Residues 595–597 (SAK) form a G5 region.

The protein belongs to the TRAFAC class translation factor GTPase superfamily. Classic translation factor GTPase family. IF-2 subfamily.

Its subcellular location is the cytoplasm. Its function is as follows. One of the essential components for the initiation of protein synthesis. Protects formylmethionyl-tRNA from spontaneous hydrolysis and promotes its binding to the 30S ribosomal subunits. Also involved in the hydrolysis of GTP during the formation of the 70S ribosomal complex. This Lactococcus lactis subsp. cremoris (Streptococcus cremoris) protein is Translation initiation factor IF-2 (infB).